We begin with the raw amino-acid sequence, 110 residues long: Transcription factor S (110 aa).

Residues Cys-4, Cys-7, Cys-22, Cys-25, Cys-71, Cys-74, Cys-99, and Cys-102 each contribute to the Zn(2+) site. The TFIIS-type zinc-finger motif lies at 67–107; the sequence is TKVTCPKCGNDTAYWWEMQTRAGDEPSTIFYKCTKCGYTWR.

The protein belongs to the archaeal rpoM/eukaryotic RPA12/RPB9/RPC11 RNA polymerase family.

Its subcellular location is the chromosome. Functionally, involved in transcriptional proofreading and fidelity. Induces RNA cleavage activity in RNA polymerase (RNAP). Stimulates transcription elongation by RNAP on both naked DNA and histone-bound DNA (chromatin), facilitating transcription through the histone barrier. Stimulation depends on transcript cleavage. In the presence of TFS, the cleavage activity of RNAP truncates RNA back to position +15 in a stepwise manner by releasing mainly dinucleotides from the 3'-end of the nascent RNA. The truncated RNAs are able to continue elongation. Misincorporation of nucleotides during elongation of transcription leads to arrested elongation complexes which are rescued by TFS-promoted removal of a dinucleotide from the 3'-end. TFS is able to induce a cleavage resynthesis cycle in stalled elongation complexes (resulting from the next missing nucleotide or a reduced incorporation rate of a wrong nucleotide) preventing misincorporation and enabling proofreading in a post-incorporation manner. Pausing of elongation complexes is the main determinant of TFS-induced RNA cleavage. The sequence is that of Transcription factor S from Thermococcus kodakarensis (strain ATCC BAA-918 / JCM 12380 / KOD1) (Pyrococcus kodakaraensis (strain KOD1)).